The chain runs to 177 residues: NADH-quinone oxidoreductase subunit B (177 aa).

4 residues coordinate [4Fe-4S] cluster: cysteine 53, cysteine 54, cysteine 118, and cysteine 148.

It belongs to the complex I 20 kDa subunit family. In terms of assembly, NDH-1 is composed of 14 different subunits. Subunits NuoB, C, D, E, F, and G constitute the peripheral sector of the complex. [4Fe-4S] cluster is required as a cofactor.

The protein resides in the cell membrane. The enzyme catalyses a quinone + NADH + 5 H(+)(in) = a quinol + NAD(+) + 4 H(+)(out). Functionally, NDH-1 shuttles electrons from NADH, via FMN and iron-sulfur (Fe-S) centers, to quinones in the respiratory chain. The immediate electron acceptor for the enzyme in this species is believed to be a menaquinone. Couples the redox reaction to proton translocation (for every two electrons transferred, four hydrogen ions are translocated across the cytoplasmic membrane), and thus conserves the redox energy in a proton gradient. This is NADH-quinone oxidoreductase subunit B from Anoxybacillus flavithermus (strain DSM 21510 / WK1).